Here is a 125-residue protein sequence, read N- to C-terminus: Small ribosomal subunit protein uS13 (125 aa).

Belongs to the universal ribosomal protein uS13 family. As to quaternary structure, part of the 30S ribosomal subunit. Forms a loose heterodimer with protein S19. Forms two bridges to the 50S subunit in the 70S ribosome.

In terms of biological role, located at the top of the head of the 30S subunit, it contacts several helices of the 16S rRNA. In the 70S ribosome it contacts the 23S rRNA (bridge B1a) and protein L5 of the 50S subunit (bridge B1b), connecting the 2 subunits; these bridges are implicated in subunit movement. Contacts the tRNAs in the A and P-sites. In Rickettsia prowazekii (strain Madrid E), this protein is Small ribosomal subunit protein uS13.